The sequence spans 448 residues: Cysteine--tRNA ligase (448 aa).

Cysteine 27 is a Zn(2+) binding site. The 'HIGH' region signature appears at 29–39; it reads PTVYNYIHVGN. Residues cysteine 210, histidine 235, and glutamate 239 each coordinate Zn(2+). A 'KMSKS' region motif is present at residues 267–271; the sequence is KMSKS. Position 270 (lysine 270) interacts with ATP.

This sequence belongs to the class-I aminoacyl-tRNA synthetase family. As to quaternary structure, monomer. Zn(2+) serves as cofactor.

Its subcellular location is the cytoplasm. It carries out the reaction tRNA(Cys) + L-cysteine + ATP = L-cysteinyl-tRNA(Cys) + AMP + diphosphate. The sequence is that of Cysteine--tRNA ligase from Lactococcus lactis subsp. cremoris (strain SK11).